Reading from the N-terminus, the 167-residue chain is Gem-associated protein 6 (167 aa).

Residues 7–74 (KGPLEWQDYI…VQTVETMNEG (68 aa)) enclose the Sm domain. One can recognise an AD domain in the interval 69–167 (ETMNEGDHRV…LIEGHLTASQ (99 aa)). 2 positions are modified to phosphoserine: S95 and S166.

Part of the core SMN complex that contains SMN1, GEMIN2/SIP1, DDX20/GEMIN3, GEMIN4, GEMIN5, GEMIN6, GEMIN7, GEMIN8 and STRAP/UNRIP. Part of the SMN-Sm complex that contains SMN1, GEMIN2/SIP1, DDX20/GEMIN3, GEMIN4, GEMIN5, GEMIN6, GEMIN7, GEMIN8, STRAP/UNRIP and the Sm proteins SNRPB, SNRPD1, SNRPD2, SNRPD3, SNRPE, SNRPF and SNRPG. Interacts with GEMIN7; the interaction is direct. Interacts with GEMIN8; the interaction is direct. Interacts with SNRPB, SNRPD2, SNRPD3 and SNRPE; the interaction is direct.

The protein localises to the nucleus. It is found in the nucleoplasm. The protein resides in the gem. It localises to the cytoplasm. The SMN complex catalyzes the assembly of small nuclear ribonucleoproteins (snRNPs), the building blocks of the spliceosome, and thereby plays an important role in the splicing of cellular pre-mRNAs. Most spliceosomal snRNPs contain a common set of Sm proteins SNRPB, SNRPD1, SNRPD2, SNRPD3, SNRPE, SNRPF and SNRPG that assemble in a heptameric protein ring on the Sm site of the small nuclear RNA to form the core snRNP (Sm core). In the cytosol, the Sm proteins SNRPD1, SNRPD2, SNRPE, SNRPF and SNRPG are trapped in an inactive 6S pICln-Sm complex by the chaperone CLNS1A that controls the assembly of the core snRNP. To assemble core snRNPs, the SMN complex accepts the trapped 5Sm proteins from CLNS1A forming an intermediate. Binding of snRNA inside 5Sm triggers eviction of the SMN complex, thereby allowing binding of SNRPD3 and SNRPB to complete assembly of the core snRNP. This Homo sapiens (Human) protein is Gem-associated protein 6 (GEMIN6).